The primary structure comprises 278 residues: Shikimate dehydrogenase (NADP(+)) (278 aa).

Shikimate is bound by residues 18 to 20 and threonine 65; that span reads SRS. Residue lysine 69 is the Proton acceptor of the active site. Glutamate 80 contributes to the NADP(+) binding site. Positions 89 and 104 each coordinate shikimate. NADP(+) is bound by residues 129 to 133 and leucine 218; that span reads GAGGS. Shikimate is bound at residue tyrosine 220. Glycine 241 is an NADP(+) binding site.

The protein belongs to the shikimate dehydrogenase family. As to quaternary structure, homodimer.

The enzyme catalyses shikimate + NADP(+) = 3-dehydroshikimate + NADPH + H(+). It participates in metabolic intermediate biosynthesis; chorismate biosynthesis; chorismate from D-erythrose 4-phosphate and phosphoenolpyruvate: step 4/7. Involved in the biosynthesis of the chorismate, which leads to the biosynthesis of aromatic amino acids. Catalyzes the reversible NADPH linked reduction of 3-dehydroshikimate (DHSA) to yield shikimate (SA). This chain is Shikimate dehydrogenase (NADP(+)), found in Rhodopseudomonas palustris (strain TIE-1).